Here is a 38-residue protein sequence, read N- to C-terminus: Large ribosomal subunit protein bL36 (38 aa).

The protein belongs to the bacterial ribosomal protein bL36 family.

This is Large ribosomal subunit protein bL36 from Synechocystis sp. (strain ATCC 27184 / PCC 6803 / Kazusa).